The chain runs to 340 residues: Guanine nucleotide-binding protein G(I)/G(S)/G(T) subunit beta-1 (340 aa).

WD repeat units follow at residues 53–83 (GHLA…IVWD), 95–125 (LRSS…SIYS), 141–170 (GHTG…ALWD), 182–212 (GHTG…KLWD), 224–254 (GHES…RLFD), 268–298 (NIIC…NVWD), and 310–340 (GHDN…KIWN).

Belongs to the WD repeat G protein beta family. G proteins are composed of 3 units, alpha, beta and gamma.

Guanine nucleotide-binding proteins (G proteins) are involved as a modulator or transducer in various transmembrane signaling systems. The beta and gamma chains are required for the GTPase activity, for replacement of GDP by GTP, and for G protein-effector interaction. The sequence is that of Guanine nucleotide-binding protein G(I)/G(S)/G(T) subunit beta-1 (GBETA1) from Homarus americanus (American lobster).